The sequence spans 220 residues: Uracil-DNA glycosylase (220 aa).

The active-site Proton acceptor is the aspartate 65.

The protein belongs to the uracil-DNA glycosylase (UDG) superfamily. UNG family.

Its subcellular location is the cytoplasm. The enzyme catalyses Hydrolyzes single-stranded DNA or mismatched double-stranded DNA and polynucleotides, releasing free uracil.. Excises uracil residues from the DNA which can arise as a result of misincorporation of dUMP residues by DNA polymerase or due to deamination of cytosine. In Bacteroides thetaiotaomicron (strain ATCC 29148 / DSM 2079 / JCM 5827 / CCUG 10774 / NCTC 10582 / VPI-5482 / E50), this protein is Uracil-DNA glycosylase.